The sequence spans 766 residues: MDRRTRENPERTFDLVLKVKCHASENEDPEVLWKFPEDFGDQEVLQSVPKFCFPFDVERVSQNQVGQHFTFVLTDMESKQRFGFCRLTSGGRICLCILSYLPWFEVYYKLLNTLADYLAKELEEDLNETLKSLYNHPVPKANTPVNLSVHSCFITPDITGLPTIPESRNLTEYFVAVDVNNMLRLYASMLHERRIIITSSKLSTLTACLHGSAALLYPMYWQHIYIPVLPPHLLDYCCAPMPYLIGIHSSLIERVKNKSLEDVVVLNVDTNTLESPFNDLSSLPSDVVSALKNKLKKQSTATGDGVARAFLRAQAALFGSYRDALRYKPGEPITFCEESFVKHRSSVMKQFLETAVNLQLFKQFIDGRLAKLNAGRGFSDIFEEEITSGGFCGGSPRSYQQWVYTVKKGGALFNTAVTKATPAVRTAYKFAKSHARLGLKEVKSRLKHKDNEEEYGTCSGLVQYTPVYTLHNEKGENREKHKLSQTHLKRPHKSLDGTLYDDDDDDDDIERASKISSEDGEETRAYFYESDDSVEAQVKAPYSGEMDLLGEILDTLSTHSSDQGKLAPAKSLDFFRSMDDIDYKPTNKSNAPSENNLALLCASGDQGEWNLGQDDSALHGRQLPPSPRKRVSSGGLTESLFILKEESREKPLCADSVSGPTVVGKPAPTSGLRSQPAAPEASQTERGRAEVKQTPGQAPLQSEDLSVPGPGSRQSTFVPWEKAGKEDTKPSKDVGLLQEVVSLCHMSCDFQQDLNISEESRSGNQT.

The uDENN domain occupies 14-143 (DLVLKVKCHA…YNHPVPKANT (130 aa)). The region spanning 160-296 (GLPTIPESRN…VVSALKNKLK (137 aa)) is the cDENN domain. The region spanning 298–375 (QSTATGDGVA…DGRLAKLNAG (78 aa)) is the dDENN domain. An FXDXF motif motif is present at residues 378–382 (FSDIF). Residues 472 to 523 (NEKGENREKHKLSQTHLKRPHKSLDGTLYDDDDDDDDIERASKISSEDGEET) are disordered. The segment covering 480 to 492 (KHKLSQTHLKRPH) has biased composition (basic residues). A compositionally biased stretch (acidic residues) spans 499–509 (LYDDDDDDDDI). A Phosphotyrosine modification is found at Tyr-500. Ser-516, Ser-517, Ser-530, and Ser-533 each carry phosphoserine. The short motif at 547–556 (DLLGEILDTL) is the Clathrin box element. Disordered stretches follow at residues 611-634 (LGQD…VSSG) and 652-732 (LCAD…KPSK). Phosphoserine is present on residues Ser-632 and Ser-633. Over residues 694–704 (TPGQAPLQSED) the composition is skewed to polar residues. Residues 722 to 732 (KAGKEDTKPSK) show a composition bias toward basic and acidic residues.

In terms of assembly, interacts with RAB35. Interacts with clathrin heavy chain/CLTC. Interacts with components of the adapter protein complex 2 (AP-2) AP2A2 and AP2B1. Interacts with CD3E. Post-translationally, phosphorylated on serine and/or threonine, possibly regulating the guanine nucleotide exchange factor (GEF) activity. As to expression, expressed in a subset of dendritic cells (DCs).

Its subcellular location is the cytoplasm. The protein localises to the cytosol. It is found in the cytoplasmic vesicle. It localises to the clathrin-coated vesicle. Guanine nucleotide exchange factor (GEF) for RAB35 that acts as a regulator of T-cell receptor (TCR) internalization in TH2 cells. Acts by promoting the exchange of GDP to GTP, converting inactive GDP-bound RAB35 into its active GTP-bound form. Plays a role in clathrin-mediated endocytosis. Controls cytokine production in TH2 lymphocytes by controlling the rate of TCR internalization and routing to endosomes: acts by mediating clathrin-mediated endocytosis of TCR via its interaction with the adapter protein complex 2 (AP-2) and GEF activity. Dysregulation leads to impaired TCR down-modulation and recycling, affecting cytokine production in TH2 cells. In Mus musculus (Mouse), this protein is DENN domain-containing protein 1B.